A 362-amino-acid polypeptide reads, in one-letter code: Heat-inducible transcription repressor HrcA (362 aa).

This sequence belongs to the HrcA family.

Its function is as follows. Negative regulator of class I heat shock genes (grpE-dnaK-dnaJ and groELS operons). Prevents heat-shock induction of these operons. This is Heat-inducible transcription repressor HrcA from Bradyrhizobium diazoefficiens (strain JCM 10833 / BCRC 13528 / IAM 13628 / NBRC 14792 / USDA 110).